Reading from the N-terminus, the 139-residue chain is Immunogenic miracidial antigen 8I (139 aa).

The segment at 61 to 139 (IDVGDEDYHD…PKKYGSGYKH (79 aa)) is disordered. Over residues 64 to 85 (GDEDYHDGDDDVDYTDDVDDVD) the composition is skewed to acidic residues. Over residues 90–103 (SPSQLLQGGYQRNQ) the composition is skewed to polar residues.

It belongs to the immunogenic miracidial antigen family.

The chain is Immunogenic miracidial antigen 8I (8I) from Schistosoma japonicum (Blood fluke).